A 195-amino-acid chain; its full sequence is Dihydroneopterin triphosphate diphosphatase (195 aa).

Catalysis depends on D73, which acts as the Proton acceptor.

This sequence belongs to the HAM1 NTPase family. The cofactor is Mn(2+).

The catalysed reaction is 7,8-dihydroneopterin 3'-triphosphate + H2O = 7,8-dihydroneopterin 3'-phosphate + diphosphate + H(+). The protein operates within cofactor biosynthesis; tetrahydrofolate biosynthesis. Functionally, pyrophosphatase involved in the biosynthesis of tetrahydrofolate. Catalyzes the hydrolysis of dihydroneopterin triphosphate (DHNTP) to dihydroneopterin monophosphate (DHNMP) and pyrophosphate. Shows a strict substrate specificity. Has only weak activity with GTP, ITP, XTP and dTTP, and cannot use ATP, UTP, CTP, NAD(+), NADH, diadenosine triphosphate, diadenosine tetraphosphate, ADP-ribose and UDP-glucose. In Limosilactobacillus reuteri (strain DSM 20016) (Lactobacillus reuteri), this protein is Dihydroneopterin triphosphate diphosphatase.